Consider the following 539-residue polypeptide: Glucose-6-phosphate isomerase (539 aa).

Residue Glu-349 is the Proton donor of the active site. Active-site residues include His-380 and Lys-508.

This sequence belongs to the GPI family.

It is found in the cytoplasm. It catalyses the reaction alpha-D-glucose 6-phosphate = beta-D-fructose 6-phosphate. The protein operates within carbohydrate biosynthesis; gluconeogenesis. It participates in carbohydrate degradation; glycolysis; D-glyceraldehyde 3-phosphate and glycerone phosphate from D-glucose: step 2/4. Functionally, catalyzes the reversible isomerization of glucose-6-phosphate to fructose-6-phosphate. The sequence is that of Glucose-6-phosphate isomerase from Caulobacter sp. (strain K31).